The chain runs to 347 residues: CCN family member 2 (347 aa).

Residues 1–24 (MLASVAGPVSLALVLLLCTRPATG) form the signal peptide. The IGFBP N-terminal domain occupies 25-96 (QDCSAQCQCA…NRKIGVCTAK (72 aa)). 6 disulfides stabilise this stretch: Cys27-Cys52, Cys31-Cys54, Cys33-Cys55, Cys41-Cys58, Cys66-Cys80, and Cys72-Cys93. Positions 99 to 165 (APCVFGGSVY…GKCCEEWVCD (67 aa)) constitute a VWFC domain. The TSP type-1 domain maps to 196–241 (NCLVQTTEWSACSKTCGMGISTRVTNDNTFCRLEKQSRLCMVRPCE). The heparin-binding stretch occupies residues 245–347 (EENIKKGKKC…YYRKMYGDMA (103 aa)). 5 disulfide bridges follow: Cys254/Cys291, Cys271/Cys305, Cys282/Cys321, Cys285/Cys323, and Cys290/Cys327. One can recognise a CTCK domain in the interval 254-328 (CIRTPKIAKP…KTCACHYNCP (75 aa)).

This sequence belongs to the CCN family. Monomer. Interacts with TSKU.

It is found in the secreted. It localises to the extracellular space. The protein localises to the extracellular matrix. In terms of biological role, major connective tissue mitoattractant secreted by vascular endothelial cells. Promotes proliferation and differentiation of chondrocytes. Is involved in the stimulation of osteoblast differentiation and has a critical role in osteogenesis. Mediates heparin- and divalent cation-dependent cell adhesion in many cell types including fibroblasts, myofibroblasts, endothelial and epithelial cells. Enhances fibroblast growth factor-induced DNA synthesis. The chain is CCN family member 2 from Rattus norvegicus (Rat).